We begin with the raw amino-acid sequence, 453 residues long: Formimidoylglutamate deiminase (453 aa).

The Zn(2+) site is built by H56 and H58. Residues Q61, R82, Y121, H206, and R209 each contribute to the N-formimidoyl-L-glutamate site. H232 is a Zn(2+) binding site. Position 235 (E235) interacts with N-formimidoyl-L-glutamate. Catalysis depends on proton acceptor residues H269 and D320. Residue D320 coordinates Zn(2+).

It belongs to the metallo-dependent hydrolases superfamily. Homodimer. The cofactor is Zn(2+).

It carries out the reaction N-formimidoyl-L-glutamate + H2O = N-formyl-L-glutamate + NH4(+). The protein operates within amino-acid degradation; L-histidine degradation into L-glutamate; L-glutamate from N-formimidoyl-L-glutamate (deiminase route): step 1/2. Inhibited by the metal chelator dipicolinate. Inhibited by N-formimino-L-aspartate and N-guanidino-L-glutaric acid. Catalyzes the hydrolysis of N-formimino-L-glutamate to N-formyl-L-glutamate and ammonia. In Pseudomonas aeruginosa (strain ATCC 15692 / DSM 22644 / CIP 104116 / JCM 14847 / LMG 12228 / 1C / PRS 101 / PAO1), this protein is Formimidoylglutamate deiminase.